The sequence spans 1233 residues: Insulin receptor substrate 1 (1233 aa).

Ser3 is modified (phosphoserine). The tract at residues Ser3 to Ser133 is mediates interaction with PHIP. A PH domain is found at Asp12–Asn115. Ser99 is subject to Phosphoserine; by CK2. The IRS-type PTB domain occupies Phe155–Phe259. Positions Asp257–Glu425 are disordered. The span at Lys264 to Ser276 shows a compositional bias: low complexity. Ser265 and Ser302 each carry phosphoserine; by RPS6KB1. Phosphoserine; by IKKB, MAPK8 and RPS6KB1 is present on Ser307. Ser318, Ser325, Ser340, and Ser343 each carry phosphoserine. Residues Thr349–Ser358 are compositionally biased toward basic residues. Composition is skewed to low complexity over residues Ser378–Ser399 and Ser407–Gly419. Ser414 carries the post-translational modification Phosphoserine. Residues Thr441 and Thr448 each carry the phosphothreonine modification. Tyr460 carries the post-translational modification Phosphotyrosine; by INSR. The YXXM motif 1 signature appears at Tyr460–Met463. Ser522 is modified (phosphoserine; by RPS6KB1). Short sequence motifs (YXXM motif) lie at residues Tyr546–Met549 and Tyr608–Met611. At Tyr608 the chain carries Phosphotyrosine; by INSR. Ser612 carries the post-translational modification Phosphoserine. Tyr628 bears the Phosphotyrosine; by INSR mark. The YXXM motif 4 signature appears at Tyr628–Met631. Ser632 carries the phosphoserine; by RPS6KB1 and ROCK2 modification. Residues Gln651–Leu720 form a disordered region. Tyr658 bears the Phosphotyrosine mark. The short motif at Tyr658 to Met661 is the YXXM motif 5 element. Residues Ser662–Ser689 are compositionally biased toward low complexity. The YXXM motif 6 motif lies at Tyr727–Met730. Residues Phe766–Thr985 form a disordered region. Over residues Arg771 to Arg780 the composition is skewed to basic and acidic residues. 2 stretches are compositionally biased toward low complexity: residues Arg785 to Arg794 and Asp801 to Ser810. Residue Ser789 is modified to Phosphoserine; by AMPK and SIK2. At Ser887 the chain carries Phosphoserine. A phosphotyrosine; by INSR mark is found at Tyr891, Tyr935, and Tyr983. A GRB2-binding region spans residues Tyr891–Asn893. 3 short sequence motifs (YXXM motif) span residues Tyr935–Met938, Tyr983–Met986, and Tyr1006–Met1009. The tract at residues Ala1015–Ser1137 is disordered. A compositionally biased stretch (low complexity) spans Ser1032–Pro1042. Polar residues-rich tracts occupy residues Gln1043–His1052 and Thr1069–Ala1081. Phosphoserine is present on residues Ser1096 and Ser1097. The segment covering Ala1116–Ser1129 has biased composition (gly residues). Tyr1173 carries the phosphotyrosine; by INSR modification. The tract at residues Leu1178–Gln1233 is disordered. Lys1180 is covalently cross-linked (Glycyl lysine isopeptide (Lys-Gly) (interchain with G-Cter in ubiquitin)). A compositionally biased stretch (polar residues) spans Gly1203 to Lys1227. Tyr1220 is modified (phosphotyrosine; by INSR).

Interacts (via phosphorylated YXXM motifs) with PIK3R1. Interacts with ROCK1. Interacts with GRB2. Interacts with SOCS7. Interacts (via IRS-type PTB domain) with IGF1R and INSR (via the tyrosine-phosphorylated NPXY motif). Interacts with UBTF and PIK3CA. Interacts (via PH domain) with PHIP. Interacts with FER. Interacts with ALK. Interacts with EIF2AK2/PKR. Interacts with GKAP1. Interacts with DGKZ in the absence of insulin; insulin stimulation decreases this interaction. Found in a ternary complex with DGKZ and PIP5K1A in the absence of insulin stimulation. Interacts with SQSTM1; the interaction is disrupted by the presence of tensin TNS2. Interacts with NCK1 (via SH2 domain). Interacts with NCK2 (via SH3 domain). Interacts with SH2B1; this interaction enhances leptin-induced activation of the PI3-kinase pathway. Interacts with DVL2; this interaction promotes the Wnt/beta-catenin signaling pathway. In terms of processing, serine phosphorylation of IRS1 is a mechanism for insulin resistance. Ser-307 phosphorylation inhibits insulin action through disruption of IRS1 interaction with the insulin receptor. Phosphorylation of Tyr-891 is required for GRB2-binding. Phosphorylated by ALK. Phosphorylated at Ser-265, Ser-302, Ser-632 and Ser-1097 by RPS6KB1; phosphorylation induces accelerated degradation of IRS1. Phosphorylated on tyrosine residues in response to insulin. In skeletal muscles, dephosphorylated on Tyr-608 by TNS2 under anabolic conditions; dephosphorylation results in the proteasomal degradation of IRS1. Ubiquitinated by the Cul7-RING(FBXW8) complex in a mTOR-dependent manner, leading to its degradation: the Cul7-RING(FBXW8) complex recognizes and binds IRS1 previously phosphorylated by S6 kinase (RPS6KB1 or RPS6KB2). Ubiquitinated by TRAF4 through 'Lys-29' linkage; this ubiquitination regulates the interaction of IRS1 with IGFR and IRS1 tyrosine phosphorylation upon IGF1 stimulation. Post-translationally, S-nitrosylation at by BLVRB inhibits its activity. In terms of tissue distribution, expressed in osteoblasts, but not in osteoclasts.

Its subcellular location is the cytoplasm. It is found in the nucleus. In terms of biological role, signaling adapter protein that participates in the signal transduction from two prominent receptor tyrosine kinases, insulin receptor/INSR and insulin-like growth factor I receptor/IGF1R. Plays therefore an important role in development, growth, glucose homeostasis as well as lipid metabolism. Upon phosphorylation by the insulin receptor, functions as a signaling scaffold that propagates insulin action through binding to SH2 domain-containing proteins including the p85 regulatory subunit of PI3K, NCK1, NCK2, GRB2 or SHP2. Recruitment of GRB2 leads to the activation of the guanine nucleotide exchange factor SOS1 which in turn triggers the Ras/Raf/MEK/MAPK signaling cascade. Activation of the PI3K/AKT pathway is responsible for most of insulin metabolic effects in the cell, and the Ras/Raf/MEK/MAPK is involved in the regulation of gene expression and in cooperation with the PI3K pathway regulates cell growth and differentiation. Acts a positive regulator of the Wnt/beta-catenin signaling pathway through suppression of DVL2 autophagy-mediated degradation leading to cell proliferation. The polypeptide is Insulin receptor substrate 1 (Irs1) (Mus musculus (Mouse)).